The chain runs to 410 residues: Cell division protein FtsZ (410 aa).

GTP contacts are provided by residues 22 to 26, 109 to 111, glutamate 140, arginine 144, and aspartate 188; these read GGGGN and GTG. The tract at residues 318-410 is disordered; sequence ESKKDRKPHR…STPPFFRRKR (93 aa). Residues 330–344 show a composition bias toward polar residues; the sequence is RQAVQPMQQTTQSVE. Residues 360 to 398 show a composition bias toward basic and acidic residues; it reads WDIRREQNTRPKVDESSLEQVDKKEFDTFHREEPNHNDD.

This sequence belongs to the FtsZ family. As to quaternary structure, homodimer. Polymerizes to form a dynamic ring structure in a strictly GTP-dependent manner. Interacts directly with several other division proteins.

It is found in the cytoplasm. Functionally, essential cell division protein that forms a contractile ring structure (Z ring) at the future cell division site. The regulation of the ring assembly controls the timing and the location of cell division. One of the functions of the FtsZ ring is to recruit other cell division proteins to the septum to produce a new cell wall between the dividing cells. Binds GTP and shows GTPase activity. The chain is Cell division protein FtsZ from Enterococcus faecalis (strain ATCC 700802 / V583).